The chain runs to 152 residues: UPF0266 membrane protein YobD (152 aa).

3 consecutive transmembrane segments (helical) span residues 6-26, 45-65, and 67-87; these read LVLILFIAALLVYALYDQFIM, VDSVIFVGLVAILIYNNVTSH, and AQMTTWLLSALALMGFYIFWI.

Belongs to the UPF0266 family.

Its subcellular location is the cell inner membrane. This chain is UPF0266 membrane protein YobD, found in Salmonella paratyphi A (strain ATCC 9150 / SARB42).